Consider the following 270-residue polypeptide: uncharacterized protein (270 aa).

Residues 1–23 (MKKLLIILAATLVLVLGSSGNFR) form the signal peptide.

This is an uncharacterized protein from Archaeoglobus fulgidus (strain ATCC 49558 / DSM 4304 / JCM 9628 / NBRC 100126 / VC-16).